We begin with the raw amino-acid sequence, 142 residues long: Hemoglobin subunit alpha-I/II (142 aa).

One can recognise a Globin domain in the interval 2–142; it reads VLSAADKGNV…VSTVLTSKYR (141 aa). Position 4 is a phosphoserine (S4). An N6-succinyllysine mark is found at K8 and K12. N6-acetyllysine; alternate is present on K17. N6-succinyllysine; alternate is present on K17. Y25 carries the phosphotyrosine modification. A Phosphoserine modification is found at S36. An N6-succinyllysine modification is found at K41. S50 is subject to Phosphoserine. H59 contributes to the O2 binding site. Position 88 (H88) interacts with heme b. The residue at position 103 (S103) is a Phosphoserine. T109 is modified (phosphothreonine). At S125 the chain carries Phosphoserine. Phosphothreonine occurs at positions 135 and 138. At S139 the chain carries Phosphoserine.

The protein belongs to the globin family. As to quaternary structure, heterotetramer of two alpha chains and two beta chains. In terms of tissue distribution, red blood cells.

Its function is as follows. Involved in oxygen transport from the lung to the various peripheral tissues. This chain is Hemoglobin subunit alpha-I/II, found in Bison bonasus (European bison).